Here is a 353-residue protein sequence, read N- to C-terminus: S-adenosylmethionine:tRNA ribosyltransferase-isomerase (353 aa).

The protein belongs to the QueA family. In terms of assembly, monomer.

Its subcellular location is the cytoplasm. It catalyses the reaction 7-aminomethyl-7-carbaguanosine(34) in tRNA + S-adenosyl-L-methionine = epoxyqueuosine(34) in tRNA + adenine + L-methionine + 2 H(+). It participates in tRNA modification; tRNA-queuosine biosynthesis. Its function is as follows. Transfers and isomerizes the ribose moiety from AdoMet to the 7-aminomethyl group of 7-deazaguanine (preQ1-tRNA) to give epoxyqueuosine (oQ-tRNA). The chain is S-adenosylmethionine:tRNA ribosyltransferase-isomerase from Dinoroseobacter shibae (strain DSM 16493 / NCIMB 14021 / DFL 12).